A 320-amino-acid chain; its full sequence is MSTAFKMERGVKYRDAAKTSIIQVKNIDPDQELLQKPSWMKIKLPANSAKIQSIKNGMRRHGLNSVCEEASCPNLHECFNHGTATFMILGAICTRRCPFCDVAHGKPLPPDPEEPKKLAETIQDMKLKYVVITSVDRDDLPDRGAGHFAECIKEIRKINPNTQIEILVPDFRGRIEQALDKLKDNPPDVFNHNLENVPRLYRDIRPGADYQWSLKLLREFKALFPHIPTKSGLMVGLGETNEEILNVMQDLRNNGVTMLTLGQYLQPSRFHLPVARYVPPEEFDEFRTKAEVMGFEHAACGPFVRSSYHADLQASGGLVK.

[4Fe-4S] cluster is bound by residues Cys-67, Cys-72, Cys-78, Cys-93, Cys-97, Cys-100, and Ser-307. The Radical SAM core domain occupies 79–296 (FNHGTATFMI…RTKAEVMGFE (218 aa)).

The protein belongs to the radical SAM superfamily. Lipoyl synthase family. Requires [4Fe-4S] cluster as cofactor.

Its subcellular location is the cytoplasm. The catalysed reaction is [[Fe-S] cluster scaffold protein carrying a second [4Fe-4S](2+) cluster] + N(6)-octanoyl-L-lysyl-[protein] + 2 oxidized [2Fe-2S]-[ferredoxin] + 2 S-adenosyl-L-methionine + 4 H(+) = [[Fe-S] cluster scaffold protein] + N(6)-[(R)-dihydrolipoyl]-L-lysyl-[protein] + 4 Fe(3+) + 2 hydrogen sulfide + 2 5'-deoxyadenosine + 2 L-methionine + 2 reduced [2Fe-2S]-[ferredoxin]. It functions in the pathway protein modification; protein lipoylation via endogenous pathway; protein N(6)-(lipoyl)lysine from octanoyl-[acyl-carrier-protein]: step 2/2. Catalyzes the radical-mediated insertion of two sulfur atoms into the C-6 and C-8 positions of the octanoyl moiety bound to the lipoyl domains of lipoate-dependent enzymes, thereby converting the octanoylated domains into lipoylated derivatives. The sequence is that of Lipoyl synthase from Mannheimia succiniciproducens (strain KCTC 0769BP / MBEL55E).